The following is a 410-amino-acid chain: LIMR family protein SELMODRAFT_432208 (410 aa).

5 consecutive transmembrane segments (helical) span residues 30 to 50 (LWWAVYIIDTVLVIPFAIFFY), 67 to 87 (LWVVILLTVFCLLLGILYAVI), 129 to 149 (VTLMVSLFFYIFPFFIDLTTL), 156 to 176 (ICLDLWLKLSVTYVITLNTII), and 179 to 199 (ILFMMFGGVGMATLPLSLIFA). Residues 245-274 (RMFRKNVKKVQQELVFLEDDVEALNEAFPQ) adopt a coiled-coil conformation. 2 helical membrane-spanning segments follow: residues 288–308 (LVFGIVGLALSIIWLLHIIVF) and 330–350 (GGLLGTTTFAIFCYYLVMSVI). The segment covering 389–400 (PSSAMDSSSWSA) has biased composition (low complexity). Residues 389–410 (PSSAMDSSSWSADRPCRPWPWP) are disordered.

It belongs to the LIMR family.

It localises to the membrane. The polypeptide is LIMR family protein SELMODRAFT_432208 (Selaginella moellendorffii (Spikemoss)).